A 414-amino-acid polypeptide reads, in one-letter code: Gamma-glutamyl phosphate reductase (414 aa).

The protein belongs to the gamma-glutamyl phosphate reductase family.

The protein localises to the cytoplasm. The catalysed reaction is L-glutamate 5-semialdehyde + phosphate + NADP(+) = L-glutamyl 5-phosphate + NADPH + H(+). Its pathway is amino-acid biosynthesis; L-proline biosynthesis; L-glutamate 5-semialdehyde from L-glutamate: step 2/2. Functionally, catalyzes the NADPH-dependent reduction of L-glutamate 5-phosphate into L-glutamate 5-semialdehyde and phosphate. The product spontaneously undergoes cyclization to form 1-pyrroline-5-carboxylate. The chain is Gamma-glutamyl phosphate reductase from Clostridium beijerinckii (strain ATCC 51743 / NCIMB 8052) (Clostridium acetobutylicum).